The sequence spans 115 residues: SOSS complex subunit C homolog (115 aa).

It belongs to the SOSS-C family.

The chain is SOSS complex subunit C homolog from Drosophila grimshawi (Hawaiian fruit fly).